The following is a 59-amino-acid chain: Insulin (59 aa).

Disulfide bonds link Cys7–Cys45, Cys19–Cys58, and Cys44–Cys49.

Belongs to the insulin family. In terms of assembly, heterodimer of a B chain and an A chain linked by two disulfide bonds.

The protein localises to the secreted. In terms of biological role, insulin decreases blood glucose concentration. It increases cell permeability to monosaccharides, amino acids and fatty acids. It accelerates glycolysis, the pentose phosphate cycle, and glycogen synthesis in liver. This Chimaera monstrosa (Rabbit fish) protein is Insulin (ins).